Reading from the N-terminus, the 156-residue chain is Small ribosomal subunit protein uS7c (156 aa).

Belongs to the universal ribosomal protein uS7 family. In terms of assembly, part of the 30S ribosomal subunit.

Its subcellular location is the plastid. It localises to the cyanelle. One of the primary rRNA binding proteins, it binds directly to 16S rRNA where it nucleates assembly of the head domain of the 30S subunit. The protein is Small ribosomal subunit protein uS7c (rps7) of Cyanophora paradoxa.